The following is a 424-amino-acid chain: UPF0229 protein ECA2349 (424 aa).

The disordered stretch occupies residues 53–111 (SIPNADINEPMFHQGRGGHRHRVHPGNDHFVQNDKIERPQGGGGSGSGQGDASKDGEGD). A compositionally biased stretch (basic and acidic residues) spans 77 to 90 (PGNDHFVQNDKIER). The span at 92 to 101 (QGGGGSGSGQ) shows a compositional bias: gly residues.

This sequence belongs to the UPF0229 family.

The sequence is that of UPF0229 protein ECA2349 from Pectobacterium atrosepticum (strain SCRI 1043 / ATCC BAA-672) (Erwinia carotovora subsp. atroseptica).